The chain runs to 534 residues: tRNA uridine(34) acetyltransferase (534 aa).

A radical S-adenosyl-L-methionine (rSAM) region spans residues 70–330 (KPVRTISGVA…GEFKPYREEE (261 aa)). The region spanning 73–344 (RTISGVAVVA…ISYAKSIMPK (272 aa)) is the Radical SAM core domain. [4Fe-4S] cluster is bound by residues Cys-90, Cys-95, and Cys-98. Lys-150 contacts acetyl-CoA. Cys-384 and Cys-389 are oxidised to a cystine. An N-acetyltransferase domain is found at 387–534 (IRCREVGHVY…RVGAYMGKEL (148 aa)). Residues 461-464 (QLHV), 485-487 (YGR), and Tyr-518 each bind acetyl-CoA.

Belongs to the ELP3 family. The cofactor is [4Fe-4S] cluster.

The catalysed reaction is uridine(34) in tRNA + acetyl-CoA + S-adenosyl-L-methionine + H2O = 5-(carboxymethyl)uridine(34) in tRNA + 5'-deoxyadenosine + L-methionine + CoA + 2 H(+). It participates in tRNA modification. TRNA uridine(34) acetyltransferase, which mediates formation of carboxymethyluridine in the wobble base at position 34 in tRNAs. The proposed mechanism is the following: (i) recruits S-adenosyl-L-methionine and cleaves it to generate a 5'-deoxyadenosine radical (5'-dA) in the radical S-adenosyl-L-methionine (rSAM) region, (ii) hydrolyzes acetyl-CoA in the N-acetyltransferase domain and (iii) an acetyl radical is formed by the products of the two domains and (iv) is transferred onto the C5 position of uridine(34) in the bound tRNA molecule. Does not show protein lysine acetyltransferase activity. The sequence is that of tRNA uridine(34) acetyltransferase from Methanocaldococcus infernus (strain DSM 11812 / JCM 15783 / ME).